Consider the following 338-residue polypeptide: MAGSHPYFNLPDSTHPSPPSAPPSLRWHQRCQPSGATNGLLVALLGGGLPAGFVGPLSRMAYQGSNLPSLELLICRCLFHLPIALLLKLRGDPLLGPPDIRGWACFCALLNVLSIGCAYSAVQVVPAGNAATVRKGSSTVCSAVLTLCLESQGLGGYEWCGLLGSILGLIIILGPGLWTLQEGTTGVYTTLGYVQAFLGGLALSLGLLVYRSLHFPSCLPTVAFLSGLVGLLGCVPGLFVLQTPVLPSDLLSWSCVGAEGILALVSFTCVGYAVTKAHPALVCAVLHSEVVVALILQYYMLHETVALSDIMGAGVVLGSIAIITARNLSCERTGKVEE.

Residues 1-27 (MAGSHPYFNLPDSTHPSPPSAPPSLRW) form a disordered region. 9 helical membrane passes run 37–57 (TNGL…VGPL), 67–87 (LPSL…ALLL), 102–122 (GWAC…YSAV), 160–180 (CGLL…LWTL), 190–210 (TLGY…LLVY), 221–241 (TVAF…LFVL), 250–270 (LLSW…FTCV), 281–301 (LVCA…YYML), and 305–325 (VALS…IITA). The 126-residue stretch at 49–174 (LPAGFVGPLS…SILGLIIILG (126 aa)) folds into the EamA 1 domain. Residues 272–325 (YAVTKAHPALVCAVLHSEVVVALILQYYMLHETVALSDIMGAGVVLGSIAIITA) form the EamA 2 domain.

The protein belongs to the SLC35G solute transporter family. Expressed in placenta and testis.

The protein resides in the membrane. The polypeptide is Solute carrier family 35 member G5 (SLC35G5) (Homo sapiens (Human)).